The chain runs to 458 residues: Ribulose bisphosphate carboxylase (458 aa).

Asparagine 111 is a substrate binding site. The active-site Proton acceptor is the lysine 166. Residue lysine 168 coordinates substrate. The Mg(2+) site is built by lysine 191, aspartate 193, and glutamate 194. An N6-carboxylysine modification is found at lysine 191. The active-site Proton acceptor is the histidine 287. Substrate-binding residues include arginine 288, histidine 321, and serine 368.

This sequence belongs to the RuBisCO large chain family. Type II subfamily. As to quaternary structure, homodimer. Mg(2+) serves as cofactor.

The enzyme catalyses 2 (2R)-3-phosphoglycerate + 2 H(+) = D-ribulose 1,5-bisphosphate + CO2 + H2O. It carries out the reaction D-ribulose 1,5-bisphosphate + O2 = 2-phosphoglycolate + (2R)-3-phosphoglycerate + 2 H(+). RuBisCO catalyzes two reactions: the carboxylation of D-ribulose 1,5-bisphosphate, the primary event in carbon dioxide fixation, as well as the oxidative fragmentation of the pentose substrate. Both reactions occur simultaneously and in competition at the same active site. The sequence is that of Ribulose bisphosphate carboxylase (cbbM) from Rhodobacter capsulatus (strain ATCC BAA-309 / NBRC 16581 / SB1003).